A 336-amino-acid polypeptide reads, in one-letter code: Peroxidase 20 (336 aa).

Residues 1–24 (MEIKQKKVWLSLIVLYAITTSVLG) form the signal peptide. Disulfide bonds link C39-C119, C72-C77, C125-C331, and C204-C239. Residue H70 is the Proton acceptor of the active site. Residues D71, V74, G76, D78, and S80 each coordinate Ca(2+). P167 contacts substrate. N170 carries N-linked (GlcNAc...) asparagine glycosylation. H197 is a binding site for heme b. T198 contributes to the Ca(2+) binding site. Ca(2+)-binding residues include D252, T255, and D260.

The protein belongs to the peroxidase family. Classical plant (class III) peroxidase subfamily. Heme b is required as a cofactor. Requires Ca(2+) as cofactor.

The protein resides in the secreted. It catalyses the reaction 2 a phenolic donor + H2O2 = 2 a phenolic radical donor + 2 H2O. In terms of biological role, removal of H(2)O(2), oxidation of toxic reductants, biosynthesis and degradation of lignin, suberization, auxin catabolism, response to environmental stresses such as wounding, pathogen attack and oxidative stress. These functions might be dependent on each isozyme/isoform in each plant tissue. May be implicated in the systemic acquired resistance response via the salicylic acid signal transduction pathway. This chain is Peroxidase 20 (PER20), found in Arabidopsis thaliana (Mouse-ear cress).